Reading from the N-terminus, the 257-residue chain is Kallikrein-1 (257 aa).

The first 18 residues, 1–18 (MWFLVLCLALSLGGTGRA), serve as a signal peptide directing secretion. Residues 19 to 24 (PPIQSR) constitute a propeptide, activation peptide. The 230-residue stretch at 25-254 (IVGGWECSQP…YVKWIEDTIA (230 aa)) folds into the Peptidase S1 domain. 5 disulfides stabilise this stretch: Cys31-Cys169, Cys47-Cys63, Cys148-Cys215, Cys180-Cys194, and Cys205-Cys230. The active-site Charge relay system is His62. O-linked (GalNAc...) serine glycosylation occurs at Ser90. Residue Asn99 is glycosylated (N-linked (GlcNAc...) asparagine). Ser101 is a glycosylation site (O-linked (GalNAc...) serine). A glycan (N-linked (GlcNAc...) asparagine) is linked at Asn105. The active-site Charge relay system is Asp116. Asn160 is a glycosylation site (N-linked (GlcNAc...) asparagine). Ser162 carries O-linked (GalNAc...) serine glycosylation. The active-site Charge relay system is Ser209.

It belongs to the peptidase S1 family. Kallikrein subfamily.

It carries out the reaction Preferential cleavage of Arg-|-Xaa bonds in small molecule substrates. Highly selective action to release kallidin (lysyl-bradykinin) from kininogen involves hydrolysis of Met-|-Xaa or Leu-|-Xaa.. Functionally, glandular kallikreins cleave Met-Lys and Arg-Ser bonds in kininogen to release Lys-bradykinin. This Macaca fascicularis (Crab-eating macaque) protein is Kallikrein-1 (KLK1).